A 287-amino-acid chain; its full sequence is Aquaporin PIP1-1 (287 aa).

A run of 2 helical transmembrane segments spans residues 57–77 and 92–114; these read IAEF…VMGV and IAWS…SGHI. An NPA 1 motif is present at residues 115–117; sequence NPA. The next 3 membrane-spanning stretches (helical) occupy residues 134 to 154, 176 to 196, and 210 to 230; these read VFYI…VKGF, GDGL…VFSA, and ILAP…TMGI. The NPA 2 motif lies at 236-238; sequence NPA. The chain crosses the membrane as a helical span at residues 258–278; the sequence is IFWVGPFIGAALAAIYHQVII.

The protein belongs to the MIP/aquaporin (TC 1.A.8) family. PIP (TC 1.A.8.11) subfamily. In terms of assembly, may interact with PIP1-2 to form heteromers. In terms of tissue distribution, highly expressed in roots, shoots and developing tassels, and at lower levels in leaves.

The protein localises to the cell membrane. In terms of biological role, water channel required to facilitate the transport of water across cell membrane. Active as heteromers with PIP1-2, but not as homomers. The polypeptide is Aquaporin PIP1-1 (PIP1-1) (Zea mays (Maize)).